The following is a 115-amino-acid chain: uncharacterized protein (115 aa).

Topologically, residues 1–11 (MKLTKEKKNDC) are cytoplasmic. Residues 12 to 32 (LVGVSYIPPLNFFTLTFLFLL) form a helical membrane-spanning segment. Topologically, residues 33 to 52 (RIEKVHLSLSLSLSLSLRFY) are extracellular. Residues 53-73 (YFHNVCYPSLFLFFCFVIPFF) traverse the membrane as a helical segment. The Cytoplasmic portion of the chain corresponds to 74–78 (YSVRF). The chain crosses the membrane as a helical span at residues 79 to 98 (ILLYLHILRSFYELNILLLY). The Extracellular segment spans residues 99-115 (GAENSRRQSPPGYYVIR).

It is found in the membrane. This is an uncharacterized protein from Saccharomyces cerevisiae (strain ATCC 204508 / S288c) (Baker's yeast).